Consider the following 976-residue polypeptide: Metabotropic glutamate receptor (976 aa).

Positions 1–25 are cleaved as a signal peptide; it reads MKQKNNNGTILVVVMVLSWSRVVDL. The Extracellular portion of the chain corresponds to 26-626; it reads KSPSNTHTQD…IQYMKWNSLF (601 aa). Asn112 and Asn143 each carry an N-linked (GlcNAc...) asparagine glycan. Residues Ser158 and 179–181 contribute to the L-glutamate site; that span reads AST. Asn216 is a glycosylation site (N-linked (GlcNAc...) asparagine). Tyr229 serves as a coordination point for L-glutamate. Residue Asn299 is glycosylated (N-linked (GlcNAc...) asparagine). Position 310 (Asp310) interacts with L-glutamate. A glycan (N-linked (GlcNAc...) asparagine) is linked at Asn386. Residue Lys417 coordinates L-glutamate. Residues Asn491 and Asn524 are each glycosylated (N-linked (GlcNAc...) asparagine). A helical membrane pass occupies residues 627 to 649; the sequence is ALIPMAIAIFGIALTSIVIVLFA. At 650–663 the chain is on the cytoplasmic side; sequence KNHDTPLVRASGRE. Residues 664 to 684 traverse the membrane as a helical segment; it reads LSYTLLFGILVCYCNTFALIA. The Extracellular portion of the chain corresponds to 685–695; it reads KPTIGSCVLQR. Residues 696 to 714 form a helical membrane-spanning segment; sequence FGIGVGFSIIYSALLTKTN. Topologically, residues 715-738 are cytoplasmic; that stretch reads RISRIFHSASKSAQRLKYISPQSQ. The helical transmembrane segment at 739 to 759 threads the bilayer; it reads VVITTSLIAIQVLITMIWMVV. The Extracellular segment spans residues 760 to 782; the sequence is EPPGTRFYYPDRREVILKCKIQD. A helical transmembrane segment spans residues 783 to 804; that stretch reads MSFLFSQLYNMILITICTIYAI. Residues 805–817 lie on the Cytoplasmic side of the membrane; it reads KTRKIPENFNESK. The helical transmembrane segment at 818-840 threads the bilayer; the sequence is FIGFTMYTTCIIWLAFVPIYFGT. The Extracellular portion of the chain corresponds to 841 to 850; it reads GNSYEVQTTT. A helical transmembrane segment spans residues 851–876; it reads LCISISLSASVALVCLYSPKVYILVF. The Cytoplasmic segment spans residues 877–976; sequence HPDKNVRKLT…VEPICHIVNK (100 aa). Positions 920–946 are disordered; it reads LTGGAVGTNASSSTLPTQNSPHLDEAS. Over residues 927–946 the composition is skewed to polar residues; the sequence is TNASSSTLPTQNSPHLDEAS.

The protein belongs to the G-protein coupled receptor 3 family. As to expression, expressed in the neurons of the larval CNS from the beginning of the first until the third instar. Expression in the third-instar larval CNS is restricted to a discrete number of somas and projections in the brain lobes and in the ventral ganglion. In the ventral nerve cord, expression is detected both in somas and projections. Expressed in the antennal lobes, the optic lobes, the central complex and the median bundle in the adult CNS.

The protein resides in the cell membrane. Functionally, G-protein coupled receptor for glutamate. Ligand binding causes a conformation change that triggers signaling via guanine nucleotide-binding proteins (G proteins) and modulates the activity of down-stream effectors. This chain is Metabotropic glutamate receptor (mGluR), found in Drosophila melanogaster (Fruit fly).